The chain runs to 292 residues: Oxidative stress-responsive serine-rich protein 1 (292 aa).

A disordered region spans residues 27-175 (SIASLSVGEG…SSDATQVSQA (149 aa)). A compositionally biased stretch (basic residues) spans 65–83 (STRKSSRGVVRTQRRRRSK). 2 positions are modified to phosphothreonine: threonine 143 and threonine 233.

The sequence is that of Oxidative stress-responsive serine-rich protein 1 (OSER1) from Pongo abelii (Sumatran orangutan).